The chain runs to 360 residues: Phospho-N-acetylmuramoyl-pentapeptide-transferase (360 aa).

The next 10 membrane-spanning stretches (helical) occupy residues 27–47, 71–91, 93–113, 128–148, 168–188, 199–219, 239–259, 262–282, 288–308, and 337–357; these read GAMI…INSL, TPTM…LLWA, LASV…AIGF, FSGK…AFTI, LVIN…VGAG, GLAI…AYLS, LAVV…FNAP, AIFM…TVAV, IVLA…IIQV, and QVVI…LSTL.

It belongs to the glycosyltransferase 4 family. MraY subfamily. It depends on Mg(2+) as a cofactor.

It is found in the cell inner membrane. It carries out the reaction UDP-N-acetyl-alpha-D-muramoyl-L-alanyl-gamma-D-glutamyl-meso-2,6-diaminopimeloyl-D-alanyl-D-alanine + di-trans,octa-cis-undecaprenyl phosphate = di-trans,octa-cis-undecaprenyl diphospho-N-acetyl-alpha-D-muramoyl-L-alanyl-D-glutamyl-meso-2,6-diaminopimeloyl-D-alanyl-D-alanine + UMP. The protein operates within cell wall biogenesis; peptidoglycan biosynthesis. Catalyzes the initial step of the lipid cycle reactions in the biosynthesis of the cell wall peptidoglycan: transfers peptidoglycan precursor phospho-MurNAc-pentapeptide from UDP-MurNAc-pentapeptide onto the lipid carrier undecaprenyl phosphate, yielding undecaprenyl-pyrophosphoryl-MurNAc-pentapeptide, known as lipid I. In Brucella abortus (strain S19), this protein is Phospho-N-acetylmuramoyl-pentapeptide-transferase.